A 436-amino-acid chain; its full sequence is GTPase Der (436 aa).

2 EngA-type G domains span residues 4–167 (PTVA…PVEE) and 175–351 (IRFS…ESQN). GTP-binding positions include 10 to 17 (GRPNVGKS), 57 to 61 (DTGGI), 119 to 122 (NKVD), 181 to 188 (GRPNVGKS), 229 to 233 (DTAGM), and 294 to 297 (NKWD). One can recognise a KH-like domain in the interval 352 to 436 (KRIPSAVLND…PIHLIARKRK (85 aa)).

This sequence belongs to the TRAFAC class TrmE-Era-EngA-EngB-Septin-like GTPase superfamily. EngA (Der) GTPase family. As to quaternary structure, associates with the 50S ribosomal subunit.

GTPase that plays an essential role in the late steps of ribosome biogenesis. This chain is GTPase Der, found in Streptococcus pyogenes serotype M1.